The sequence spans 341 residues: Inositol 2-dehydrogenase (341 aa).

Belongs to the Gfo/Idh/MocA family. In terms of assembly, homotetramer.

The catalysed reaction is myo-inositol + NAD(+) = scyllo-inosose + NADH + H(+). Involved in the oxidation of myo-inositol (MI) to 2-keto-myo-inositol (2KMI or 2-inosose). This chain is Inositol 2-dehydrogenase, found in Acidothermus cellulolyticus (strain ATCC 43068 / DSM 8971 / 11B).